The sequence spans 239 residues: Orotidine 5'-phosphate decarboxylase (239 aa).

Substrate is bound by residues Asp-15, Lys-36, Asp-63–Thr-72, Thr-127, Arg-189, Gln-198, Gly-218, and Arg-219. The active-site Proton donor is Lys-65.

It belongs to the OMP decarboxylase family. Type 1 subfamily. In terms of assembly, homodimer.

It catalyses the reaction orotidine 5'-phosphate + H(+) = UMP + CO2. The protein operates within pyrimidine metabolism; UMP biosynthesis via de novo pathway; UMP from orotate: step 2/2. Its function is as follows. Catalyzes the decarboxylation of orotidine 5'-monophosphate (OMP) to uridine 5'-monophosphate (UMP). The chain is Orotidine 5'-phosphate decarboxylase from Prochlorococcus marinus subsp. pastoris (strain CCMP1986 / NIES-2087 / MED4).